We begin with the raw amino-acid sequence, 195 residues long: MSDINQIEFSEISKKDELKSIIESLLFVSGEPLALKDICRIVEEDFKYVEDLMRELMNIYNGDSSRGIKIISLNGTYQLVTKTKNSEYVQKLLKKNVRQSLSQASLESLAIICYKQPITRVEIDEIRGVKSESAIQRLVEKNLVEETGRLEVPGRPILYGTTDEFLRHFALNDLGDLPSIELFEENDEVSDMVEE.

It belongs to the ScpB family. Homodimer. Homodimerization may be required to stabilize the binding of ScpA to the Smc head domains. Component of a cohesin-like complex composed of ScpA, ScpB and the Smc homodimer, in which ScpA and ScpB bind to the head domain of Smc. The presence of the three proteins is required for the association of the complex with DNA.

It localises to the cytoplasm. Its function is as follows. Participates in chromosomal partition during cell division. May act via the formation of a condensin-like complex containing Smc and ScpA that pull DNA away from mid-cell into both cell halves. The sequence is that of Segregation and condensation protein B from Clostridium perfringens (strain ATCC 13124 / DSM 756 / JCM 1290 / NCIMB 6125 / NCTC 8237 / Type A).